The sequence spans 496 residues: Lysine--tRNA ligase (496 aa).

Mg(2+) contacts are provided by Glu409 and Glu416.

The protein belongs to the class-II aminoacyl-tRNA synthetase family. As to quaternary structure, homodimer. It depends on Mg(2+) as a cofactor.

The protein localises to the cytoplasm. The catalysed reaction is tRNA(Lys) + L-lysine + ATP = L-lysyl-tRNA(Lys) + AMP + diphosphate. In Streptococcus mutans serotype c (strain ATCC 700610 / UA159), this protein is Lysine--tRNA ligase.